A 209-amino-acid polypeptide reads, in one-letter code: Probable GTP-binding protein EngB (209 aa).

Positions 27 to 201 (SGVEIAFAGR…ATKLDSWFAE (175 aa)) constitute an EngB-type G domain. Residues 35-42 (GRSNAGKS), 62-66 (GRTQL), 80-83 (DLPG), 147-150 (TKAD), and 180-182 (YSA) contribute to the GTP site. Positions 42 and 64 each coordinate Mg(2+).

It belongs to the TRAFAC class TrmE-Era-EngA-EngB-Septin-like GTPase superfamily. EngB GTPase family. It depends on Mg(2+) as a cofactor.

Functionally, necessary for normal cell division and for the maintenance of normal septation. The sequence is that of Probable GTP-binding protein EngB from Glaesserella parasuis serovar 5 (strain SH0165) (Haemophilus parasuis).